A 377-amino-acid polypeptide reads, in one-letter code: Citrate synthase (377 aa).

Catalysis depends on residues histidine 220, histidine 259, and aspartate 313.

This sequence belongs to the citrate synthase family. In terms of assembly, homodimer.

It catalyses the reaction oxaloacetate + acetyl-CoA + H2O = citrate + CoA + H(+). It participates in carbohydrate metabolism; tricarboxylic acid cycle; isocitrate from oxaloacetate: step 1/2. Functionally, might regulate the synthesis and function of enzymes involved in later enzymatic steps of Krebs cycle. Loss in activity results in sporulation defect. This is Citrate synthase (gltA) from Deinococcus radiodurans (strain ATCC 13939 / DSM 20539 / JCM 16871 / CCUG 27074 / LMG 4051 / NBRC 15346 / NCIMB 9279 / VKM B-1422 / R1).